We begin with the raw amino-acid sequence, 49 residues long: uncharacterized protein (49 aa).

Belongs to the metallo-dependent hydrolases superfamily. TatD-type hydrolase family. Requires a divalent metal cation as cofactor.

This is an uncharacterized protein from Geobacillus stearothermophilus (Bacillus stearothermophilus).